The following is a 122-amino-acid chain: Biogenesis of lysosome-related organelles complex 1 subunit CNL1 (122 aa).

The segment covering 1-10 (MQDNSSHSRE) has biased composition (basic and acidic residues). The interval 1–21 (MQDNSSHSRESASAGDDPLGI) is disordered. Residues 63-95 (ENTIDKNIAKFKELLEKCDTLENHYEMLNQLAI) are a coiled coil.

The protein belongs to the BLOC1S4 family. As to quaternary structure, component of the biogenesis of lysosome-related organelles complex-1 (BLOC-1) composed of at least BLI1, BLS1, CNL1, KXD1, SNN1 and VAB2.

The protein resides in the cytoplasm. Component of the biogenesis of lysosome-related organelles complex-1 (BLOC-1), a complex that is involved in endosomal cargo sorting. In Saccharomyces cerevisiae (strain Lalvin QA23) (Baker's yeast), this protein is Biogenesis of lysosome-related organelles complex 1 subunit CNL1 (CLN1).